The following is a 189-amino-acid chain: Putative manganese efflux pump MntP (189 aa).

6 helical membrane-spanning segments follow: residues 3-23 (PVSL…AAIG), 41-61 (IIFG…GQAA), 65-85 (VADW…LHMI), 106-128 (WILA…GLAF), 141-161 (GLAT…LGAV), and 168-188 (MVGG…HLSA).

The protein belongs to the MntP (TC 9.B.29) family.

It localises to the cell inner membrane. In terms of biological role, probably functions as a manganese efflux pump. The chain is Putative manganese efflux pump MntP from Pseudomonas aeruginosa (strain UCBPP-PA14).